We begin with the raw amino-acid sequence, 210 residues long: Thymidylate kinase (210 aa).

Residue glycine 11 to serine 18 coordinates ATP.

It belongs to the thymidylate kinase family.

The enzyme catalyses dTMP + ATP = dTDP + ADP. Functionally, phosphorylation of dTMP to form dTDP in both de novo and salvage pathways of dTTP synthesis. The sequence is that of Thymidylate kinase from Vibrio campbellii (strain ATCC BAA-1116).